The sequence spans 301 residues: Porphobilinogen deaminase (301 aa).

Cysteine 242 bears the S-(dipyrrolylmethanemethyl)cysteine mark.

Belongs to the HMBS family. As to quaternary structure, monomer. It depends on dipyrromethane as a cofactor.

It carries out the reaction 4 porphobilinogen + H2O = hydroxymethylbilane + 4 NH4(+). It functions in the pathway porphyrin-containing compound metabolism; protoporphyrin-IX biosynthesis; coproporphyrinogen-III from 5-aminolevulinate: step 2/4. In terms of biological role, tetrapolymerization of the monopyrrole PBG into the hydroxymethylbilane pre-uroporphyrinogen in several discrete steps. The polypeptide is Porphobilinogen deaminase (Rickettsia canadensis (strain McKiel)).